The primary structure comprises 880 residues: Lon protease (880 aa).

Positions 1–37 are disordered; sequence MADYNDKNYLLHMSGPDSDTGPGIENEDPRAVENPGH. Residues 27 to 37 show a composition bias toward basic and acidic residues; sequence EDPRAVENPGH. A Lon N-terminal domain is found at 57 to 251; it reads LPILPVRDVV…LVNTQLQREV (195 aa). 404 to 411 lines the ATP pocket; sequence GPPGVGKT. Residues 640–821 form the Lon proteolytic domain; the sequence is KLMPGMALGL…DELLPLVFEG (182 aa). Residues serine 727 and lysine 770 contribute to the active site. A compositionally biased stretch (gly residues) spans 826–836; the sequence is GGVSGAGQAGD. Residues 826–880 form a disordered region; it reads GGVSGAGQAGDKGGKSKAAAGKKDVVAARPAKPAAPARRRKDKTEDELPTAEAGA. A compositionally biased stretch (low complexity) spans 852 to 861; the sequence is AARPAKPAAP.

It belongs to the peptidase S16 family. As to quaternary structure, homohexamer. Organized in a ring with a central cavity.

Its subcellular location is the cytoplasm. It carries out the reaction Hydrolysis of proteins in presence of ATP.. ATP-dependent serine protease that mediates the selective degradation of mutant and abnormal proteins as well as certain short-lived regulatory proteins. Required for cellular homeostasis and for survival from DNA damage and developmental changes induced by stress. Degrades polypeptides processively to yield small peptide fragments that are 5 to 10 amino acids long. Binds to DNA in a double-stranded, site-specific manner. This is Lon protease from Desulfovibrio desulfuricans (strain ATCC 27774 / DSM 6949 / MB).